Here is a 137-residue protein sequence, read N- to C-terminus: Large ribosomal subunit protein uL16 (137 aa).

The protein belongs to the universal ribosomal protein uL16 family. In terms of assembly, part of the 50S ribosomal subunit.

Its function is as follows. Binds 23S rRNA and is also seen to make contacts with the A and possibly P site tRNAs. This Cereibacter sphaeroides (strain ATCC 17025 / ATH 2.4.3) (Rhodobacter sphaeroides) protein is Large ribosomal subunit protein uL16.